We begin with the raw amino-acid sequence, 334 residues long: Probable tRNA pseudouridine synthase B (334 aa).

The active-site Nucleophile is the D82. The PUA domain occupies 250–325; it reads LPKVWIRDSA…IAVDVDKVFM (76 aa).

The protein belongs to the pseudouridine synthase TruB family. Type 2 subfamily.

The catalysed reaction is uridine(55) in tRNA = pseudouridine(55) in tRNA. In terms of biological role, could be responsible for synthesis of pseudouridine from uracil-55 in the psi GC loop of transfer RNAs. The polypeptide is Probable tRNA pseudouridine synthase B (Thermococcus gammatolerans (strain DSM 15229 / JCM 11827 / EJ3)).